The sequence spans 460 residues: Phosphomethylpyrimidine synthase (460 aa).

Residues Asn80, Met109, Tyr139, His175, 195 to 197, 236 to 239, and Glu275 each bind substrate; these read SRG and DSLR. His279 contacts Zn(2+). Tyr302 contributes to the substrate binding site. Position 343 (His343) interacts with Zn(2+). Residues Cys423, Cys426, and Cys431 each contribute to the [4Fe-4S] cluster site.

It belongs to the ThiC family. [4Fe-4S] cluster serves as cofactor.

It carries out the reaction 5-amino-1-(5-phospho-beta-D-ribosyl)imidazole + S-adenosyl-L-methionine = 4-amino-2-methyl-5-(phosphooxymethyl)pyrimidine + CO + 5'-deoxyadenosine + formate + L-methionine + 3 H(+). The protein operates within cofactor biosynthesis; thiamine diphosphate biosynthesis. Functionally, catalyzes the synthesis of the hydroxymethylpyrimidine phosphate (HMP-P) moiety of thiamine from aminoimidazole ribotide (AIR) in a radical S-adenosyl-L-methionine (SAM)-dependent reaction. The chain is Phosphomethylpyrimidine synthase from Microcystis aeruginosa (strain NIES-843 / IAM M-2473).